A 400-amino-acid chain; its full sequence is Homoserine O-acetyltransferase (400 aa).

Residues 64 to 374 (NAILVCHALT…DKGHDAFLLD (311 aa)) form the AB hydrolase-1 domain. Serine 169 acts as the Nucleophile in catalysis. Arginine 239 is a substrate binding site. Catalysis depends on residues aspartate 335 and histidine 368. Residue aspartate 369 coordinates substrate.

It belongs to the AB hydrolase superfamily. MetX family. In terms of assembly, homodimer.

It is found in the cytoplasm. It catalyses the reaction L-homoserine + acetyl-CoA = O-acetyl-L-homoserine + CoA. The protein operates within amino-acid biosynthesis; L-methionine biosynthesis via de novo pathway; O-acetyl-L-homoserine from L-homoserine: step 1/1. Transfers an acetyl group from acetyl-CoA to L-homoserine, forming acetyl-L-homoserine. This Rhodopseudomonas palustris (strain ATCC BAA-98 / CGA009) protein is Homoserine O-acetyltransferase.